Here is a 116-residue protein sequence, read N- to C-terminus: MSATAATAPPAAPAGEGGPPAPPPNLTSNRRLQQTQAQVDEVVDIMRVNVDKVLERDQKLSELDDRADALQAGASQFETSAAKLKRKYWWKNLKMMIILGVICAIILIIIIVYFSS.

The interval 1–33 (MSATAATAPPAAPAGEGGPPAPPPNLTSNRRLQ) is disordered. Ser-2 bears the N-acetylserine mark. The Cytoplasmic segment spans residues 2 to 94 (SATAATAPPA…KRKYWWKNLK (93 aa)). Positions 31-91 (RLQQTQAQVD…AKLKRKYWWK (61 aa)) constitute a v-SNARE coiled-coil homology domain. The required for interaction with SEPT8 stretch occupies residues 92 to 116 (NLKMMIILGVICAIILIIIIVYFSS). A helical; Anchor for type IV membrane protein transmembrane segment spans residues 95 to 114 (MMIILGVICAIILIIIIVYF). The Vesicular segment spans residues 115 to 116 (SS).

The protein belongs to the synaptobrevin family. In terms of assembly, part of the SNARE core complex containing SNAP25, VAMP2 and STX1A; this complex constitutes the basic catalytic machinery of the complex neurotransmitter release apparatus. Recruited to the SNARE complex following binding of the SNARE complex component STX1A to STXBP1. This complex binds to CPLX1. Interacts with POPDC1 and STX4. Interacts with VAPA and VAPB. Interacts with WDFY2, PRKCZ and PRKCI. Forms a complex with WDFY2 and PRKCZ. Interacts (via N-terminus) with KCNB1 (via N-terminus and C-terminus); stimulates the channel inactivation rate of KCNB1. Interacts with SEPT8; the interaction inhibits interaction of VAMP2 with SYP. Interacts with SYP; the interaction is inhibited by interaction with SEPT8. Interacts with PICALM. Interacts with alpha-synuclein/SNCA. Interacts with STX3. In terms of processing, phosphorylated by PRKCZ in vitro and this phosphorylation is increased in the presence of WDFY2.

It is found in the cytoplasmic vesicle. It localises to the secretory vesicle. The protein localises to the synaptic vesicle membrane. The protein resides in the cell membrane. Involved in the targeting and/or fusion of transport vesicles to their target membrane. Major SNARE protein of synaptic vesicles which mediates fusion of synaptic vesicles to release neurotransmitters. Essential for fast vesicular exocytosis and activity-dependent neurotransmitter release as well as fast endocytosis that mediates rapid reuse of synaptic vesicles. Modulates the gating characteristics of the delayed rectifier voltage-dependent potassium channel KCNB1. This Bos taurus (Bovine) protein is Vesicle-associated membrane protein 2 (VAMP2).